Consider the following 284-residue polypeptide: L-ribulose-5-phosphate 3-epimerase UlaE (284 aa).

The protein belongs to the L-ribulose-5-phosphate 3-epimerase family.

It carries out the reaction L-ribulose 5-phosphate = L-xylulose 5-phosphate. The protein operates within cofactor degradation; L-ascorbate degradation; D-xylulose 5-phosphate from L-ascorbate: step 3/4. Functionally, catalyzes the isomerization of L-xylulose-5-phosphate to L-ribulose-5-phosphate. Is involved in the anaerobic L-ascorbate utilization. The sequence is that of L-ribulose-5-phosphate 3-epimerase UlaE from Salmonella dublin (strain CT_02021853).